A 484-amino-acid polypeptide reads, in one-letter code: Aldehyde dehydrogenase family 3 member F1 (484 aa).

192-197 contacts NAD(+); sequence GSPKIG. The Proton acceptor role is filled by E214. C252 acts as the Nucleophile in catalysis.

It belongs to the aldehyde dehydrogenase family. In terms of assembly, homotetramer. Constituively expressed at low levels.

The enzyme catalyses an aldehyde + NAD(+) + H2O = a carboxylate + NADH + 2 H(+). The protein is Aldehyde dehydrogenase family 3 member F1 (ALDH3F1) of Arabidopsis thaliana (Mouse-ear cress).